We begin with the raw amino-acid sequence, 117 residues long: Neurotoxic enhancer CSTX-13 (117 aa).

Positions 1 to 20 are cleaved as a signal peptide; that stretch reads MKVLVIFAVLSLVIFSNCSA. A propeptide spanning residues 21 to 47 is cleaved from the precursor; it reads ETDEDFFGEESFEADDIIPFIAKEQVR. Disulfide bonds link cysteine 50/cysteine 65, cysteine 57/cysteine 74, cysteine 64/cysteine 95, and cysteine 76/cysteine 93. A propeptide spanning residues 82-87 is cleaved from the precursor; the sequence is RSETAR. Threonine amide is present on threonine 116.

Belongs to the neurotoxin 19 (CSTX) family. 12 subfamily. Heterodimer of A and B chains; disulfide-linked. Interacts with CSTX-1 (AC P81694) (Kd=430 nM), and with CSTX-9 (AC P58604) (Kd=370 nM). As to expression, expressed by the venom gland.

The protein localises to the secreted. It is found in the target cell membrane. Functionally, synergistic toxin that induces or increases a cytolytic effect when combined with CSTX-1 (AC P81694) or CSTX-9 (AC P58604). When alone, has a weak insecticidal activity, with an unknown molecular target. This chain is Neurotoxic enhancer CSTX-13, found in Cupiennius salei (American wandering spider).